The chain runs to 345 residues: L-threonine 3-dehydrogenase (345 aa).

A Zn(2+)-binding site is contributed by C42. Active-site charge relay system residues include T44 and H47. Residues H67, E68, C97, C100, C103, and C111 each contribute to the Zn(2+) site. NAD(+) contacts are provided by residues I179, D199, R204, 266-268 (LGI), and 290-291 (IY).

This sequence belongs to the zinc-containing alcohol dehydrogenase family. As to quaternary structure, homotetramer. The cofactor is Zn(2+).

It localises to the cytoplasm. The catalysed reaction is L-threonine + NAD(+) = (2S)-2-amino-3-oxobutanoate + NADH + H(+). The protein operates within amino-acid degradation; L-threonine degradation via oxydo-reductase pathway; glycine from L-threonine: step 1/2. Functionally, catalyzes the NAD(+)-dependent oxidation of L-threonine to 2-amino-3-ketobutyrate. This Rhizobium etli (strain CIAT 652) protein is L-threonine 3-dehydrogenase.